The sequence spans 140 residues: Large ribosomal subunit protein uL11 (140 aa).

The protein belongs to the universal ribosomal protein uL11 family. Part of the ribosomal stalk of the 50S ribosomal subunit. Interacts with L10 and the large rRNA to form the base of the stalk. L10 forms an elongated spine to which L12 dimers bind in a sequential fashion forming a multimeric L10(L12)X complex. Post-translationally, one or more lysine residues are methylated.

Forms part of the ribosomal stalk which helps the ribosome interact with GTP-bound translation factors. This is Large ribosomal subunit protein uL11 from Staphylococcus epidermidis (strain ATCC 35984 / DSM 28319 / BCRC 17069 / CCUG 31568 / BM 3577 / RP62A).